A 164-amino-acid polypeptide reads, in one-letter code: 3-isopropylmalate dehydratase small subunit (164 aa).

This sequence belongs to the LeuD family. LeuD type 2 subfamily. In terms of assembly, heterodimer of LeuC and LeuD.

It catalyses the reaction (2R,3S)-3-isopropylmalate = (2S)-2-isopropylmalate. Its pathway is amino-acid biosynthesis; L-leucine biosynthesis; L-leucine from 3-methyl-2-oxobutanoate: step 2/4. Catalyzes the isomerization between 2-isopropylmalate and 3-isopropylmalate, via the formation of 2-isopropylmaleate. The polypeptide is 3-isopropylmalate dehydratase small subunit (Lachnospira eligens (strain ATCC 27750 / DSM 3376 / VPI C15-48 / C15-B4) (Eubacterium eligens)).